Reading from the N-terminus, the 245-residue chain is OCIA domain-containing protein 1 (245 aa).

Positions 1–112 constitute an OCIA domain; it reads MNGRADFREP…KKLENSPLGE (112 aa). Phosphoserine occurs at positions 108, 116, 123, and 191. Disordered regions lie at residues 111-141 and 169-245; these read GEAL…VSGQ and NESA…TWDE. Basic and acidic residues-rich tracts occupy residues 190–210 and 224–238; these read ESPK…RESY and PMHE…KVNK.

It belongs to the OCIAD1 family. As to quaternary structure, interacts with OCIAD2. Interacts with STAT3. Isoform 1 is highly expressed in many tissues, including testis, brain, placenta, ovary, prostate and mammary gland. Isoform 2 expression is restricted to the central nervous system including brain, cerebellum and spinal cord.

The protein resides in the endosome. Its function is as follows. Maintains stem cell potency. Increases STAT3 phosphorylation and controls ERK phosphorylation. May act as a scaffold, increasing STAT3 recruitment onto endosomes. Involved in integrin-mediated cancer cell adhesion and colony formation in ovarian cancer. The polypeptide is OCIA domain-containing protein 1 (Homo sapiens (Human)).